A 424-amino-acid polypeptide reads, in one-letter code: UDP-sugar transporter protein SLC35A5 (424 aa).

Over Met1–His8 the chain is Cytoplasmic. The helical transmembrane segment at Pro9–Leu29 threads the bilayer. At Ser30–Thr53 the chain is on the lumenal side. Residues Val54 to Ile74 form a helical membrane-spanning segment. Residues Lys75–Asp93 lie on the Cytoplasmic side of the membrane. A helical transmembrane segment spans residues Phe94–Ser116. Residues Tyr117–Gln119 lie on the Lumenal side of the membrane. The helical transmembrane segment at Pro120–Leu142 threads the bilayer. Residues Lys143–Asn147 are Cytoplasmic-facing. A helical membrane pass occupies residues Trp148–Thr168. Residues Lys169–Arg228 lie on the Lumenal side of the membrane. Asn204 carries an N-linked (GlcNAc...) asparagine glycan. Residues Leu229–Tyr249 form a helical membrane-spanning segment. Residues Asn250–Ser263 lie on the Cytoplasmic side of the membrane. The helical transmembrane segment at Ile264 to Gly284 threads the bilayer. Over Leu285–Ser303 the chain is Lumenal. Residues Ala304–Leu324 form a helical membrane-spanning segment. Topologically, residues Lys325–Met330 are cytoplasmic. A helical transmembrane segment spans residues Phe331–Phe351. At Asp352–Arg354 the chain is on the lumenal side. Residues Pro355–Ala375 form a helical membrane-spanning segment. Residues Ser376 to Phe424 lie on the Cytoplasmic side of the membrane. 3 positions are modified to phosphoserine: Ser394, Ser416, and Ser419. The interval Leu397–Phe424 is disordered. Residues Leu408–Asp417 are compositionally biased toward basic and acidic residues.

This sequence belongs to the nucleotide-sugar transporter family. SLC35A subfamily. Probably forms homooligomers and heterooligomers with SLC35A1, SLC35A2, SLC35A3 and SLC35A4.

It localises to the golgi apparatus membrane. The catalysed reaction is UMP(out) + UDP-alpha-D-glucuronate(in) = UMP(in) + UDP-alpha-D-glucuronate(out). The enzyme catalyses UMP(out) + UDP-N-acetyl-alpha-D-glucosamine(in) = UMP(in) + UDP-N-acetyl-alpha-D-glucosamine(out). It catalyses the reaction UDP-N-acetyl-alpha-D-galactosamine(in) + UMP(out) = UDP-N-acetyl-alpha-D-galactosamine(out) + UMP(in). Probable UDP-sugar:UMP transmembrane antiporter involved in UDP-alpha-D-glucuronate/UDP-GlcA, UDP-GlcNAc/UDP-N-acetyl-alpha-D-glucosamine and UDP-N-acetyl-alpha-D-galactosamine/UDP-GalNAc transport from the cytosol to the lumen of the Golgi. This is UDP-sugar transporter protein SLC35A5 from Homo sapiens (Human).